The primary structure comprises 399 residues: Dual-specificity RNA methyltransferase RlmN (399 aa).

The Proton acceptor role is filled by Glu122. The region spanning 128–371 (ETDRGTLCVS…VRTPRGRDIL (244 aa)) is the Radical SAM core domain. Cys135 and Cys374 are joined by a disulfide. [4Fe-4S] cluster is bound by residues Cys142, Cys146, and Cys149. S-adenosyl-L-methionine-binding positions include 200 to 201 (GE), Ser232, 254 to 256 (SLH), and Asn331. Catalysis depends on Cys374, which acts as the S-methylcysteine intermediate.

Belongs to the radical SAM superfamily. RlmN family. The cofactor is [4Fe-4S] cluster.

It localises to the cytoplasm. It carries out the reaction adenosine(2503) in 23S rRNA + 2 reduced [2Fe-2S]-[ferredoxin] + 2 S-adenosyl-L-methionine = 2-methyladenosine(2503) in 23S rRNA + 5'-deoxyadenosine + L-methionine + 2 oxidized [2Fe-2S]-[ferredoxin] + S-adenosyl-L-homocysteine. The catalysed reaction is adenosine(37) in tRNA + 2 reduced [2Fe-2S]-[ferredoxin] + 2 S-adenosyl-L-methionine = 2-methyladenosine(37) in tRNA + 5'-deoxyadenosine + L-methionine + 2 oxidized [2Fe-2S]-[ferredoxin] + S-adenosyl-L-homocysteine. Specifically methylates position 2 of adenine 2503 in 23S rRNA and position 2 of adenine 37 in tRNAs. m2A2503 modification seems to play a crucial role in the proofreading step occurring at the peptidyl transferase center and thus would serve to optimize ribosomal fidelity. The protein is Dual-specificity RNA methyltransferase RlmN of Rhodopseudomonas palustris (strain HaA2).